Consider the following 197-residue polypeptide: Phosphoheptose isomerase (197 aa).

Positions 40–197 constitute an SIS domain; sequence CIASIAQGGK…LVEHSIFGKQ (158 aa). 55-57 lines the substrate pocket; that stretch reads NGG. Positions 64 and 68 each coordinate Zn(2+). Substrate contacts are provided by residues E68, 97–98, 123–125, S128, and Q175; these read ND and STS. Zn(2+)-binding residues include Q175 and H183.

This sequence belongs to the SIS family. GmhA subfamily. Homotetramer. Zn(2+) serves as cofactor.

It is found in the cytoplasm. The enzyme catalyses 2 D-sedoheptulose 7-phosphate = D-glycero-alpha-D-manno-heptose 7-phosphate + D-glycero-beta-D-manno-heptose 7-phosphate. It participates in carbohydrate biosynthesis; D-glycero-D-manno-heptose 7-phosphate biosynthesis; D-glycero-alpha-D-manno-heptose 7-phosphate and D-glycero-beta-D-manno-heptose 7-phosphate from sedoheptulose 7-phosphate: step 1/1. Its pathway is capsule biogenesis; capsule polysaccharide biosynthesis. In terms of biological role, catalyzes the isomerization of sedoheptulose 7-phosphate in D-glycero-D-manno-heptose 7-phosphate. The protein is Phosphoheptose isomerase of Burkholderia mallei (strain ATCC 23344).